Reading from the N-terminus, the 1062-residue chain is Protein P1-P2 (1062 aa).

Residues 1–20 form the signal peptide; sequence MNRFTAYAALFFMFSLCSTA. Helical transmembrane passes span 121-141, 144-164, and 172-192; these read AASVTLWAIINIWFGLYWTLA, ITLFLWTFSIEALCLILLGCI, and ALSLSEHLPVFLFMSPLKIIW. The Peptidase S39 domain maps to 207–399; that stretch reads VEGYKGFSVP…GITSPNYVFE (193 aa). Active-site for protease activity residues include His255, Asp286, and Ser354. The disordered stretch occupies residues 455–560; that stretch reads ATNAPAEKTA…QTKEARKAWR (106 aa). Polar residues predominate over residues 463-484; that stretch reads TAQTNSAEKTAPSTSAEKTALT. A compositionally biased stretch (basic residues) spans 497-511; that stretch reads QNKRQLRHPRRRYKR. The span at 551-560 shows a compositional bias: basic and acidic residues; it reads QTKEARKAWR. The RdRp catalytic domain maps to 859–974; sequence EYTRPTDCSG…APNSDLEEYK (116 aa).

Post-translationally, specific enzymatic cleavages in vivo yield mature proteins. The protease probably cleaves itself and releases the RdRp (Potential). Cleavages have been shown in the P1 protein, but since the N-terminus containing the serine protease is shared between P1 and P1-P2, cleavages should also occur within the P1-P2 protein.

The protein localises to the membrane. It carries out the reaction RNA(n) + a ribonucleoside 5'-triphosphate = RNA(n+1) + diphosphate. In terms of biological role, precursor from which the RNA-dependent RNA polymerase (RdRp) is probably released. RNA-dependent RNA polymerase plays an essential role in virus replication (Potential). This chain is Protein P1-P2, found in Potato leafroll virus (strain Potato/Scotland/strain 1/1984) (PLrV).